The following is a 234-amino-acid chain: Uridylate kinase (234 aa).

9–12 lines the ATP pocket; that stretch reads KLSG. Glycine 51 is a UMP binding site. Glycine 52 and arginine 56 together coordinate ATP. UMP is bound by residues aspartate 71 and 132–139; that span reads CGNPFFTT. The ATP site is built by threonine 159, tyrosine 165, and aspartate 168.

It belongs to the UMP kinase family. In terms of assembly, homohexamer.

The protein localises to the cytoplasm. It carries out the reaction UMP + ATP = UDP + ADP. Its pathway is pyrimidine metabolism; CTP biosynthesis via de novo pathway; UDP from UMP (UMPK route): step 1/1. Inhibited by UTP. Functionally, catalyzes the reversible phosphorylation of UMP to UDP. This Prochlorococcus marinus (strain MIT 9301) protein is Uridylate kinase.